The following is a 33-amino-acid chain: Photosystem II reaction center protein Psb30 (33 aa).

Residues 5–25 (VIAQLTVLALIVISGPLVIAL) traverse the membrane as a helical segment.

Belongs to the Psb30/Ycf12 family. PSII is composed of 1 copy each of membrane proteins PsbA, PsbB, PsbC, PsbD, PsbE, PsbF, PsbH, PsbI, PsbJ, PsbK, PsbL, PsbM, PsbT, PsbX, PsbY, PsbZ, Psb30/Ycf12, peripheral proteins of the oxygen-evolving complex and a large number of cofactors. It forms dimeric complexes.

Its subcellular location is the plastid. The protein localises to the chloroplast thylakoid membrane. Its function is as follows. A core subunit of photosystem II (PSII), probably helps stabilize the reaction center. The polypeptide is Photosystem II reaction center protein Psb30 (Huperzia lucidula (Shining clubmoss)).